The chain runs to 510 residues: NAD(P)H-quinone oxidoreductase subunit 2 A, chloroplastic (510 aa).

13 helical membrane-spanning segments follow: residues 24 to 44 (LLLFHGSFIFPECILIFGLIL), 57 to 77 (IPWLYFISSTSLVMSITALLF), 99 to 119 (IFQFLILLCSTLCIPLSVEYI), 124 to 144 (MAITEFLLFVLTATLGGMFLC), 149 to 169 (LITIFVAPECFSLCSYLLSGY), 183 to 203 (YLLMGGASSSILVHGFSWLYG), 227 to 247 (PGISIALIFITVGIGFKLSPA), 295 to 315 (WHLLLEILAILSMILGNLIAI), 323 to 343 (MLAYSSIGQIGYVIIGIIVGD), 347 to 367 (GYASMITYMLFYISMNLGTFA), 395 to 415 (ALSSALCLLSLGGLPPLAGFF), 418 to 438 (LHLFWCGWQAGLYFLVSIGLL), and 484 to 504 (MIVCVIASTIPGISMNPIIAI).

It belongs to the complex I subunit 2 family. As to quaternary structure, NDH is composed of at least 16 different subunits, 5 of which are encoded in the nucleus.

The protein resides in the plastid. The protein localises to the chloroplast thylakoid membrane. It catalyses the reaction a plastoquinone + NADH + (n+1) H(+)(in) = a plastoquinol + NAD(+) + n H(+)(out). The enzyme catalyses a plastoquinone + NADPH + (n+1) H(+)(in) = a plastoquinol + NADP(+) + n H(+)(out). NDH shuttles electrons from NAD(P)H:plastoquinone, via FMN and iron-sulfur (Fe-S) centers, to quinones in the photosynthetic chain and possibly in a chloroplast respiratory chain. The immediate electron acceptor for the enzyme in this species is believed to be plastoquinone. Couples the redox reaction to proton translocation, and thus conserves the redox energy in a proton gradient. This Platanus occidentalis (Sycamore) protein is NAD(P)H-quinone oxidoreductase subunit 2 A, chloroplastic.